Here is a 496-residue protein sequence, read N- to C-terminus: Fibronectin type III and SPRY domain-containing protein 1 (496 aa).

Residues 4 to 99 (QKEALRKIIT…ALESSEELLE (96 aa)) adopt a coiled-coil conformation. The 58-residue stretch at 105–162 (LLATDSKDFPQAAKQIKDGVTMAPAFRLSLKAKVSDNMSHLMVDFAQERRMLQALTFL) folds into the COS domain. In terms of domain architecture, Fibronectin type-III spans 164-268 (VPSAPVIDLT…EPVTLETPAF (105 aa)). The B30.2/SPRY domain occupies 268-477 (FMFRLDASTS…VTTGLQVPSS (210 aa)). Residues 301-336 (KAREKDGKGRTASPVNSPARGTPSPKRMPSGRGGRD) form a disordered region. Residues Arg-310 and Arg-320 each carry the omega-N-methylarginine modification.

Oligomerization is required for binding to microtubules.

The protein resides in the cytoplasm. It is found in the cytoskeleton. It localises to the microtubule organizing center. Its subcellular location is the centrosome. The protein localises to the nucleus. The protein resides in the cleavage furrow. Its function is as follows. May be involved in microtubule organization and stabilization. In Bos taurus (Bovine), this protein is Fibronectin type III and SPRY domain-containing protein 1 (FSD1).